A 468-amino-acid polypeptide reads, in one-letter code: UDP-N-acetylmuramate--L-alanine ligase (468 aa).

116–122 is an ATP binding site; the sequence is GTHGKTT.

The protein belongs to the MurCDEF family.

The protein localises to the cytoplasm. It carries out the reaction UDP-N-acetyl-alpha-D-muramate + L-alanine + ATP = UDP-N-acetyl-alpha-D-muramoyl-L-alanine + ADP + phosphate + H(+). Its pathway is cell wall biogenesis; peptidoglycan biosynthesis. Cell wall formation. The polypeptide is UDP-N-acetylmuramate--L-alanine ligase (Fusobacterium nucleatum subsp. nucleatum (strain ATCC 25586 / DSM 15643 / BCRC 10681 / CIP 101130 / JCM 8532 / KCTC 2640 / LMG 13131 / VPI 4355)).